Reading from the N-terminus, the 147-residue chain is MKFTKSLLLLIVAVFASSNAAETFSNFQVTNSEASSPCVTTPVELKVNTCQSACGSILNVLPVTGSTSKFTFNQFGAQDTKCAATPTSSNEFTCVDGKSKVAIGSTTYSVVCVPDKTNSSESDSSDSTRIGASFALAAAALLSMIAL.

A signal peptide spans 1 to 20; that stretch reads MKFTKSLLLLIVAVFASSNA. The GPI-like-anchor amidated asparagine moiety is linked to residue asparagine 118. N-linked (GlcNAc...) asparagine glycosylation is present at asparagine 118. Positions 119-147 are cleaved as a propeptide — removed in mature form; it reads SSESDSSDSTRIGASFALAAAALLSMIAL.

Belongs to the ponticulin family. The GPI-like-anchor contains a phosphoceramide group, rather than a phosphatidyl group.

The protein resides in the cell membrane. In Dictyostelium discoideum (Social amoeba), this protein is Ponticulin-like protein C4 (ponC4).